The sequence spans 125 residues: Large ribosomal subunit protein bL12 (125 aa).

Belongs to the bacterial ribosomal protein bL12 family. Homodimer. Part of the ribosomal stalk of the 50S ribosomal subunit. Forms a multimeric L10(L12)X complex, where L10 forms an elongated spine to which 2 to 4 L12 dimers bind in a sequential fashion. Binds GTP-bound translation factors.

Functionally, forms part of the ribosomal stalk which helps the ribosome interact with GTP-bound translation factors. Is thus essential for accurate translation. The polypeptide is Large ribosomal subunit protein bL12 (Variovorax paradoxus (strain S110)).